Here is a 175-residue protein sequence, read N- to C-terminus: ADP-ribosylation factor 6 (175 aa).

The N-myristoyl glycine moiety is linked to residue glycine 2. A lipid anchor (N6-myristoyl lysine) is attached at lysine 3. GTP-binding positions include 23 to 28 (AAGKTT), 41 to 44 (TIPT), 63 to 67 (DVGGQ), 122 to 125 (NKQD), and 155 to 156 (CA).

Belongs to the small GTPase superfamily. Arf family.

It localises to the cytoplasm. The protein localises to the cytosol. It is found in the cell membrane. Its subcellular location is the endosome membrane. The protein resides in the recycling endosome membrane. It localises to the cell projection. The protein localises to the filopodium membrane. It is found in the ruffle. Its subcellular location is the cleavage furrow. The protein resides in the midbody. It localises to the midbody ring. The protein localises to the golgi apparatus. The catalysed reaction is GTP + H2O = GDP + phosphate + H(+). GTP-binding protein involved in protein trafficking; regulates endocytic recycling and cytoskeleton remodeling. May modulate vesicle budding and uncoating within the Golgi apparatus. May contribute to the regulation of dendritic branching, filopodia extension and dendritic spine development. The protein is ADP-ribosylation factor 6 (arf6) of Xenopus laevis (African clawed frog).